A 455-amino-acid chain; its full sequence is Glutamyl-tRNA reductase (455 aa).

Substrate-binding positions include Thr49 to Arg52, Ser109, Glu114 to Gln116, and Gln120. Cys50 functions as the Nucleophile in the catalytic mechanism. Residue Gly189–Gly194 coordinates NADP(+).

This sequence belongs to the glutamyl-tRNA reductase family. Homodimer.

The enzyme catalyses (S)-4-amino-5-oxopentanoate + tRNA(Glu) + NADP(+) = L-glutamyl-tRNA(Glu) + NADPH + H(+). It participates in porphyrin-containing compound metabolism; protoporphyrin-IX biosynthesis; 5-aminolevulinate from L-glutamyl-tRNA(Glu): step 1/2. Functionally, catalyzes the NADPH-dependent reduction of glutamyl-tRNA(Glu) to glutamate 1-semialdehyde (GSA). This is Glutamyl-tRNA reductase from Geobacillus thermodenitrificans (strain NG80-2).